The chain runs to 62 residues: Temporin-HN1 (62 aa).

The N-terminal stretch at 1-22 (MFTLKKSLLLLLFLGTINLSLS) is a signal peptide. Positions 23 to 44 (EQERNAEEERRDDPEEMDAEVE) are excised as a propeptide. Leu-60 bears the Leucine amide mark.

As to expression, expressed by the skin glands.

It is found in the secreted. Its function is as follows. Has antimicrobial activity against some Gram-positive bacteria and fungi but has no activity against a range of Gram-negative bacteria except P.faecalis. Active against the Gram-positive bacteria S.aureus ATCC 25923 (MIC=37.5 uM), S.carnosus KHS (MIC=37.5 uM), B.licheniformis X39 (MIC=19 uM), R.rhodochrous X15 (MIC=4.8 uM), is virtually inactive against E.faecalis 981 (MIC=150 uM) and inactive against E.faecium 091299. Has some antimicrobial activity against the Gram-negative bacterium P.faecalis X29 (MIC=75 uM) and is inactive against E.coli, P.aeruginosa and S.typhi. Has antifungal activity against C.albicans ATCC 2002 (MIC=19 uM) and lower activity against the slime mold 090223 (MIC=75 uM). Has low hemolytic activity against human erythrocytes (LC(50)=75 uM). This chain is Temporin-HN1, found in Odorrana hainanensis (Odor frog).